We begin with the raw amino-acid sequence, 846 residues long: Rho GTPase-activating protein 17 (846 aa).

The BAR domain occupies Gln-14–Glu-246. Residues Thr-252–Phe-442 form the Rho-GAP domain. A compositionally biased stretch (polar residues) spans Thr-459–Gly-475. Residues Thr-459–Pro-482 are disordered. Phosphoserine is present on residues Ser-484 and Ser-575. The tract at residues Ile-519–Ser-807 is disordered. Over residues Arg-592–His-619 the composition is skewed to polar residues. Residues Ala-637–His-650 show a composition bias toward pro residues. The span at Gly-653 to Gln-690 shows a compositional bias: low complexity. Residues Ser-698 and Ser-700 each carry the phosphoserine modification. Pro residues-rich tracts occupy residues Ile-704 to Gln-717 and Glu-726 to Pro-741. 3 positions are modified to phosphothreonine: Thr-730, Thr-734, and Thr-736. Residues Thr-730–Leu-743 carry the SH3-binding motif. Residue Ser-739 is modified to Phosphoserine. At Thr-740 the chain carries Phosphothreonine. Polar residues predominate over residues Gln-746–His-757. Positions Arg-772–Pro-782 are enriched in pro residues. Positions Leu-791–Ser-807 are enriched in polar residues.

As to quaternary structure, component of a complex whose core is composed of ARHGAP17, AMOT, PALS1, PATJ and PARD3/PAR3. Interacts with NHERF1, FNBP1, TRIP10, CAPZA (CAPZA1, CAPZA2 or CAPZA3), CAPZB, CD2AP and SH3KBP1/CIN85.

Its subcellular location is the membrane. It localises to the cytoplasm. The protein localises to the cell junction. The protein resides in the tight junction. Functionally, rho GTPase-activating protein involved in the maintenance of tight junction by regulating the activity of CDC42, thereby playing a central role in apical polarity of epithelial cells. Specifically acts as a GTPase activator for the CDC42 GTPase by converting it to an inactive GDP-bound state. The complex formed with AMOT acts by regulating the uptake of polarity proteins at tight junctions, possibly by deciding whether tight junction transmembrane proteins are recycled back to the plasma membrane or sent elsewhere. Participates in the Ca(2+)-dependent regulation of exocytosis, possibly by catalyzing GTPase activity of Rho family proteins and by inducing the reorganization of the cortical actin filaments. Acts as a GTPase activator in vitro for RAC1. This is Rho GTPase-activating protein 17 (Arhgap17) from Mus musculus (Mouse).